Reading from the N-terminus, the 252-residue chain is Large ribosomal subunit protein uL29m (252 aa).

K146 bears the N6-acetyllysine mark. Over residues 230–240 the composition is skewed to basic residues; sequence KKKEKILHAKF. The interval 230-252 is disordered; the sequence is KKKEKILHAKFPHLSQERKSSSV.

Belongs to the universal ribosomal protein uL29 family. As to quaternary structure, component of the mitochondrial ribosome large subunit (39S) which comprises a 16S rRNA and about 50 distinct proteins.

The protein localises to the mitochondrion. In Mus musculus (Mouse), this protein is Large ribosomal subunit protein uL29m (Mrpl47).